A 148-amino-acid polypeptide reads, in one-letter code: Deoxyuridine 5'-triphosphate nucleotidohydrolase (148 aa).

Substrate contacts are provided by residues 67–69, N80, 84–86, and M94; these read RSG and LID.

It belongs to the dUTPase family. Mg(2+) is required as a cofactor.

The catalysed reaction is dUTP + H2O = dUMP + diphosphate + H(+). It participates in pyrimidine metabolism; dUMP biosynthesis; dUMP from dCTP (dUTP route): step 2/2. This enzyme is involved in nucleotide metabolism: it produces dUMP, the immediate precursor of thymidine nucleotides and it decreases the intracellular concentration of dUTP so that uracil cannot be incorporated into DNA. This is Deoxyuridine 5'-triphosphate nucleotidohydrolase from Burkholderia multivorans (strain ATCC 17616 / 249).